A 378-amino-acid chain; its full sequence is Cytochrome b (378 aa).

The next 4 membrane-spanning stretches (helical) occupy residues 34-54, 78-99, 114-134, and 179-199; these read FGSL…FLAM, WLLR…YLHV, WLIG…GYVL, and FFTF…IHLL. Residues His84 and His98 each coordinate heme b. Residues His183 and His197 each coordinate heme b. Position 202 (His202) interacts with a ubiquinone. Transmembrane regions (helical) follow at residues 227 to 247, 289 to 309, 321 to 341, and 348 to 368; these read FKDI…VLIS, LGGV…PFYN, INQV…WIGA, and YVLI…VNPL.

Belongs to the cytochrome b family. The main subunits of complex b-c1 are: cytochrome b, cytochrome c1 and the Rieske protein. Heme b serves as cofactor.

It is found in the mitochondrion inner membrane. Its function is as follows. Component of the ubiquinol-cytochrome c reductase complex (complex III or cytochrome b-c1 complex) that is part of the mitochondrial respiratory chain. The b-c1 complex mediates electron transfer from ubiquinol to cytochrome c. Contributes to the generation of a proton gradient across the mitochondrial membrane that is then used for ATP synthesis. This Drosophila simulans (Fruit fly) protein is Cytochrome b (mt:Cyt-b).